We begin with the raw amino-acid sequence, 147 residues long: Peptide deformylase 1 (147 aa).

Residues C90 and H132 each contribute to the Fe cation site. E133 is a catalytic residue. A Fe cation-binding site is contributed by H136.

The protein belongs to the polypeptide deformylase family. The cofactor is Fe(2+).

The enzyme catalyses N-terminal N-formyl-L-methionyl-[peptide] + H2O = N-terminal L-methionyl-[peptide] + formate. Removes the formyl group from the N-terminal Met of newly synthesized proteins. Requires at least a dipeptide for an efficient rate of reaction. N-terminal L-methionine is a prerequisite for activity but the enzyme has broad specificity at other positions. The polypeptide is Peptide deformylase 1 (Clostridium perfringens (strain 13 / Type A)).